We begin with the raw amino-acid sequence, 248 residues long: PF03932 family protein CutC (248 aa).

Belongs to the CutC family. Homodimer.

It localises to the cytoplasm. This is PF03932 family protein CutC from Salmonella heidelberg (strain SL476).